The primary structure comprises 397 residues: 1-deoxy-D-xylulose 5-phosphate reductoisomerase (397 aa).

The NADPH site is built by threonine 17, glycine 18, serine 19, isoleucine 20, alanine 45, asparagine 47, and asparagine 130. A 1-deoxy-D-xylulose 5-phosphate-binding site is contributed by lysine 131. Position 132 (glutamate 132) interacts with NADPH. Aspartate 156 provides a ligand contact to Mn(2+). 1-deoxy-D-xylulose 5-phosphate-binding residues include serine 157, glutamate 158, serine 182, and histidine 205. Glutamate 158 lines the Mn(2+) pocket. Glycine 211 is a binding site for NADPH. Residues serine 218, asparagine 223, lysine 224, and glutamate 227 each contribute to the 1-deoxy-D-xylulose 5-phosphate site. Residue glutamate 227 participates in Mn(2+) binding.

The protein belongs to the DXR family. Mg(2+) serves as cofactor. Requires Mn(2+) as cofactor.

It catalyses the reaction 2-C-methyl-D-erythritol 4-phosphate + NADP(+) = 1-deoxy-D-xylulose 5-phosphate + NADPH + H(+). The protein operates within isoprenoid biosynthesis; isopentenyl diphosphate biosynthesis via DXP pathway; isopentenyl diphosphate from 1-deoxy-D-xylulose 5-phosphate: step 1/6. Its function is as follows. Catalyzes the NADPH-dependent rearrangement and reduction of 1-deoxy-D-xylulose-5-phosphate (DXP) to 2-C-methyl-D-erythritol 4-phosphate (MEP). The chain is 1-deoxy-D-xylulose 5-phosphate reductoisomerase from Agrobacterium fabrum (strain C58 / ATCC 33970) (Agrobacterium tumefaciens (strain C58)).